Here is a 417-residue protein sequence, read N- to C-terminus: D-amino acid dehydrogenase (417 aa).

3 to 17 contributes to the FAD binding site; it reads VVILGSGVVGVSTAW.

The protein belongs to the DadA oxidoreductase family. It depends on FAD as a cofactor.

The catalysed reaction is a D-alpha-amino acid + A + H2O = a 2-oxocarboxylate + AH2 + NH4(+). The protein operates within amino-acid degradation; D-alanine degradation; NH(3) and pyruvate from D-alanine: step 1/1. Functionally, oxidative deamination of D-amino acids. The protein is D-amino acid dehydrogenase of Pectobacterium carotovorum subsp. carotovorum (strain PC1).